The following is a 555-amino-acid chain: Spermine oxidase (555 aa).

Residues Ala35, Glu55, Arg63, Thr79–Trp80, and Val261 each bind FAD. A disordered region spans residues Ala271 to Asp306. The segment covering Arg274–Gly291 has biased composition (basic and acidic residues). FAD is bound by residues Glu519 and Thr528 to Thr529.

The protein belongs to the flavin monoamine oxidase family. The cofactor is FAD. In terms of tissue distribution, widely expressed. Expressed in human tumor cell lines. Isoform 4 is only found in an embryonal kidney cell line.

The protein localises to the cytoplasm. Its subcellular location is the nucleus. It catalyses the reaction spermine + O2 + H2O = 3-aminopropanal + spermidine + H2O2. It participates in amine and polyamine degradation; spermine degradation. With respect to regulation, inhibited at more than 90% by SL-11144, SL-11150 and SL-11158, at concentrations less than 1 uM. In terms of biological role, flavoenzyme which catalyzes the oxidation of spermine to spermidine. Can also use N(1)-acetylspermine and spermidine as substrates, with different affinity depending on the isoform (isozyme) and on the experimental conditions. Plays an important role in the regulation of polyamine intracellular concentration and has the potential to act as a determinant of cellular sensitivity to the antitumor polyamine analogs. May contribute to beta-alanine production via aldehyde dehydrogenase conversion of 3-amino-propanal. The chain is Spermine oxidase (SMOX) from Homo sapiens (Human).